A 357-amino-acid polypeptide reads, in one-letter code: tRNA N6-adenosine threonylcarbamoyltransferase (357 aa).

Positions 119 and 123 each coordinate Fe cation. Residues Leu-141–Gly-145, Asp-174, Gly-187, and Asn-284 contribute to the substrate site. Asp-312 serves as a coordination point for Fe cation.

It belongs to the KAE1 / TsaD family. Requires Fe(2+) as cofactor.

Its subcellular location is the cytoplasm. It carries out the reaction L-threonylcarbamoyladenylate + adenosine(37) in tRNA = N(6)-L-threonylcarbamoyladenosine(37) in tRNA + AMP + H(+). Required for the formation of a threonylcarbamoyl group on adenosine at position 37 (t(6)A37) in tRNAs that read codons beginning with adenine. Is involved in the transfer of the threonylcarbamoyl moiety of threonylcarbamoyl-AMP (TC-AMP) to the N6 group of A37, together with TsaE and TsaB. TsaD likely plays a direct catalytic role in this reaction. The polypeptide is tRNA N6-adenosine threonylcarbamoyltransferase (Pelagibacter ubique (strain HTCC1062)).